Here is a 361-residue protein sequence, read N- to C-terminus: Tegument protein UL51 homolog (361 aa).

Cysteine 8 carries the S-palmitoyl cysteine; by host lipid modification. A disordered region spans residues 251–299; sequence GDEEDEVTVMSPSPEPVQQQPPVEPVQQQPQGRGSHRRRYKESAPQETL. Residues 266–281 show a composition bias toward low complexity; the sequence is PVQQQPPVEPVQQQPQ.

Belongs to the herpesviridae UL51 family. In terms of assembly, oligomerizes. Interacts with UL103; this interaction mediates UL103 incorporation to virions. Phosphorylated. Post-translationally, palmitoylation is necessary for Golgi localization.

Its subcellular location is the virion tegument. The protein localises to the host cytoplasm. It is found in the host Golgi apparatus. Its function is as follows. Plays several roles during the time course of infection, including egress of virus particles from the perinuclear space and secondary envelopment of cytoplasmic capsids that bud into specific trans-Golgi network (TGN)-derived membranes. The protein is Tegument protein UL51 homolog (UL71) of Homo sapiens (Human).